Here is a 276-residue protein sequence, read N- to C-terminus: Glutamate racemase (276 aa).

Residues 10-11 and 42-43 each bind substrate; these read DS and YG. The active-site Proton donor/acceptor is the Cys73. 74–75 contributes to the substrate binding site; that stretch reads NS. Catalysis depends on Cys183, which acts as the Proton donor/acceptor. Residue 184-185 participates in substrate binding; sequence TH.

It belongs to the aspartate/glutamate racemases family.

It catalyses the reaction L-glutamate = D-glutamate. It functions in the pathway cell wall biogenesis; peptidoglycan biosynthesis. Its function is as follows. Provides the (R)-glutamate required for cell wall biosynthesis. In Parafrankia sp. (strain EAN1pec), this protein is Glutamate racemase.